The following is a 485-amino-acid chain: Adenosylhomocysteinase (485 aa).

The substrate site is built by Thr-60, Asp-146, and Glu-208. 209–211 (TTT) contacts NAD(+). Residues Lys-238 and Asp-242 each contribute to the substrate site. NAD(+)-binding positions include Asn-243, 272 to 277 (GYGDVG), Glu-295, Asn-330, 351 to 353 (IGH), and Asn-399.

Belongs to the adenosylhomocysteinase family. The cofactor is NAD(+).

Its subcellular location is the cytoplasm. The enzyme catalyses S-adenosyl-L-homocysteine + H2O = L-homocysteine + adenosine. The protein operates within amino-acid biosynthesis; L-homocysteine biosynthesis; L-homocysteine from S-adenosyl-L-homocysteine: step 1/1. Functionally, may play a key role in the regulation of the intracellular concentration of adenosylhomocysteine. The protein is Adenosylhomocysteinase of Streptomyces coelicolor (strain ATCC BAA-471 / A3(2) / M145).